The primary structure comprises 1385 residues: DNA-directed RNA polymerase subunit beta'' (1385 aa).

Zn(2+)-binding residues include Cys-224, Cys-294, Cys-301, and Cys-304.

It belongs to the RNA polymerase beta' chain family. RpoC2 subfamily. In terms of assembly, in plastids the minimal PEP RNA polymerase catalytic core is composed of four subunits: alpha, beta, beta', and beta''. When a (nuclear-encoded) sigma factor is associated with the core the holoenzyme is formed, which can initiate transcription. Zn(2+) serves as cofactor.

Its subcellular location is the plastid. The protein resides in the chloroplast. It carries out the reaction RNA(n) + a ribonucleoside 5'-triphosphate = RNA(n+1) + diphosphate. DNA-dependent RNA polymerase catalyzes the transcription of DNA into RNA using the four ribonucleoside triphosphates as substrates. This chain is DNA-directed RNA polymerase subunit beta'', found in Illicium oligandrum (Star anise).